The chain runs to 21 residues: Hemocyanin subunit 1 (21 aa).

Belongs to the tyrosinase family. Hemocyanin subfamily. In terms of tissue distribution, hemolymph.

The protein resides in the secreted. Its subcellular location is the extracellular space. In terms of biological role, hemocyanins are copper-containing oxygen carriers occurring freely dissolved in the hemolymph of many mollusks and arthropods. This is Hemocyanin subunit 1 from Maja squinado (Mediterranean spider crab).